The following is a 152-amino-acid chain: FMN reductase (NADH) RutF (152 aa).

Belongs to the non-flavoprotein flavin reductase family. RutF subfamily.

The enzyme catalyses FMNH2 + NAD(+) = FMN + NADH + 2 H(+). Functionally, catalyzes the reduction of FMN to FMNH2 which is used to reduce pyrimidine by RutA via the Rut pathway. This Shigella sonnei (strain Ss046) protein is FMN reductase (NADH) RutF.